The chain runs to 254 residues: Probable glucose-1-phosphate cytidylyltransferase (254 aa).

Substrate-binding positions include 6-10 (LCGGK), 11-13 (GTR), K23, T103, R108, and G126. 2 residues coordinate Mg(2+): D127 and D232.

This sequence belongs to the glucose-1-phosphate cytidylyltransferase family. Requires Mg(2+) as cofactor.

It catalyses the reaction alpha-D-glucose 1-phosphate + CTP + H(+) = CDP-D-glucose + diphosphate. Functionally, catalyzes the transfer of a CMP moiety from CTP to glucose 1-phosphate. This chain is Probable glucose-1-phosphate cytidylyltransferase (yfnH), found in Bacillus subtilis (strain 168).